The following is a 528-amino-acid chain: Zinc finger protein 16-like (528 aa).

The interval 1-28 (MSRKRNHCYMETGASSESQGAFVDSAGP) is disordered. Residues 79–106 (IRVLKMELREKSDEIELLKAKLESAEKD) are a coiled coil. 2 disordered regions span residues 159-202 (GAAE…TDAE) and 232-293 (FKGD…DRME). Basic and acidic residues predominate over residues 232 to 242 (FKGDSETKCED). Residues 244–256 (PPMDEEDENEDSE) are compositionally biased toward acidic residues. Basic and acidic residues-rich tracts occupy residues 257–270 (EGRGSLRSVSDHFP) and 278–293 (GEDRSSPAEDSMDRME). Residues 303–326 (FICPFCGTLCPDSSFLEEHIKLMH) form a C2H2-type 1 zinc finger. Residues 333–345 (QSTSAGSSSQAEG) show a composition bias toward low complexity. Positions 333 to 359 (QSTSAGSSSQAEGDSGEAGPASRGARE) are disordered. 4 C2H2-type zinc fingers span residues 366–388 (YECGDCGRHFNYLGNLRQHQRIH), 394–416 (FVCPECGERFRHTARLKSHRLSH), 423–445 (FPCPQCGKGFPVLSGLKRHQRVH), and 451–473 (YACPQCGRRFKELGNLYTHMRIH). The segment at 479–501 (YTCYQCGRSFRHLGTYKSHRCMP) adopts a C2H2-type 6; degenerate zinc-finger fold. Residues 502–528 (ATQMPSEHSPPWAQEDKVQTGRLQGYV) form a disordered region.

It belongs to the krueppel C2H2-type zinc-finger protein family.

It localises to the nucleus. Functionally, probable transcription factor. Important for development and migration of oligodendrocyte precursor cells, and normal myelination of axons in the central nervous system (CNS). Functions autonomously in oligodendrocytes to promote CNS myelination. Seems to act in parallel with notch3 during oligodendrocyte development. In Danio rerio (Zebrafish), this protein is Zinc finger protein 16-like.